The primary structure comprises 337 residues: DNA-directed RNA polymerase subunit alpha (337 aa).

Residues 1–233 (MVREKVTVST…DLFIPFLHAQ (233 aa)) are alpha N-terminal domain (alpha-NTD). Positions 267–337 (IALKYIFIDQ…FTVDLPKNKF (71 aa)) are alpha C-terminal domain (alpha-CTD).

This sequence belongs to the RNA polymerase alpha chain family. In terms of assembly, in plastids the minimal PEP RNA polymerase catalytic core is composed of four subunits: alpha, beta, beta', and beta''. When a (nuclear-encoded) sigma factor is associated with the core the holoenzyme is formed, which can initiate transcription.

The protein resides in the plastid. The protein localises to the chloroplast. The enzyme catalyses RNA(n) + a ribonucleoside 5'-triphosphate = RNA(n+1) + diphosphate. Functionally, DNA-dependent RNA polymerase catalyzes the transcription of DNA into RNA using the four ribonucleoside triphosphates as substrates. This is DNA-directed RNA polymerase subunit alpha from Platanus occidentalis (Sycamore).